The primary structure comprises 53 residues: UPF0391 membrane protein ESA_03375 (53 aa).

A run of 2 helical transmembrane segments spans residues 4–24 and 28–48; these read WGII…GGLA and AGAA…SLFM.

Belongs to the UPF0391 family.

The protein resides in the cell membrane. In Cronobacter sakazakii (strain ATCC BAA-894) (Enterobacter sakazakii), this protein is UPF0391 membrane protein ESA_03375.